A 309-amino-acid polypeptide reads, in one-letter code: Postacrosomal sheath WW domain-binding protein (309 aa).

The GRAM domain occupies 45–87; the sequence is GRKTGTLFLTSYRVIFITSCSISDPMLSFMMPFDLMTNLTVEQ. 10 consecutive repeat copies span residues 175 to 181, 182 to 188, 189 to 195, 217 to 223, 224 to 230, 231 to 237, 238 to 244, 245 to 251, 252 to 258, and 259 to 265. A 10 X 7 AA tandem repeat of Y-G-X-P-P-X-G region spans residues 175–265; it reads YGAPPAGYGA…PLGYGAPPAG (91 aa). Positions 186–189 match the PPxY motif motif; sequence PPGY. Over residues 251–272 the composition is skewed to low complexity; the sequence is GYGAPPLGYGAPPAGNEGPPAG. The interval 251-309 is disordered; the sequence is GYGAPPLGYGAPPAGNEGPPAGYRASPAGSGARPQESTAAQAPENEASLPSASSSQVHS. Polar residues predominate over residues 298-309; sequence SLPSASSSQVHS.

As to expression, expressed in testis.

May play a role in meiotic resumption and pronuclear formation, mediated by a WW domain-signaling pathway during fertilization. This Homo sapiens (Human) protein is Postacrosomal sheath WW domain-binding protein (WBP2NL).